We begin with the raw amino-acid sequence, 393 residues long: NAD(P)H-quinone oxidoreductase subunit H 1 (393 aa).

It belongs to the complex I 49 kDa subunit family. NDH-1 can be composed of about 15 different subunits; different subcomplexes with different compositions have been identified which probably have different functions.

Its subcellular location is the cell inner membrane. The catalysed reaction is a plastoquinone + NADH + (n+1) H(+)(in) = a plastoquinol + NAD(+) + n H(+)(out). It catalyses the reaction a plastoquinone + NADPH + (n+1) H(+)(in) = a plastoquinol + NADP(+) + n H(+)(out). In terms of biological role, NDH-1 shuttles electrons from an unknown electron donor, via FMN and iron-sulfur (Fe-S) centers, to quinones in the respiratory and/or the photosynthetic chain. The immediate electron acceptor for the enzyme in this species is believed to be plastoquinone. Couples the redox reaction to proton translocation, and thus conserves the redox energy in a proton gradient. Cyanobacterial NDH-1 also plays a role in inorganic carbon-concentration. This is NAD(P)H-quinone oxidoreductase subunit H 1 from Gloeobacter violaceus (strain ATCC 29082 / PCC 7421).